The sequence spans 134 residues: Small ribosomal subunit protein uS8c (134 aa).

The protein belongs to the universal ribosomal protein uS8 family. In terms of assembly, part of the 30S ribosomal subunit.

It is found in the plastid. One of the primary rRNA binding proteins, it binds directly to 16S rRNA central domain where it helps coordinate assembly of the platform of the 30S subunit. The polypeptide is Small ribosomal subunit protein uS8c (rps8) (Cuscuta obtusiflora (Peruvian dodder)).